The primary structure comprises 108 residues: uncharacterized protein (108 aa).

This is an uncharacterized protein from Bacillus subtilis (strain 168).